Here is a 506-residue protein sequence, read N- to C-terminus: Protein MGF 505-4R (506 aa).

The protein belongs to the asfivirus MGF 505 family.

Its function is as follows. Plays a role in virus cell tropism, and may be required for efficient virus replication in macrophages. The sequence is that of Protein MGF 505-4R from Ornithodoros (relapsing fever ticks).